We begin with the raw amino-acid sequence, 429 residues long: Ribosomal RNA small subunit methyltransferase B (429 aa).

Residues 254–260 (CAAPGGK), aspartate 277, aspartate 303, and aspartate 322 contribute to the S-adenosyl-L-methionine site. Residue cysteine 375 is the Nucleophile of the active site.

It belongs to the class I-like SAM-binding methyltransferase superfamily. RsmB/NOP family.

The protein resides in the cytoplasm. The enzyme catalyses cytidine(967) in 16S rRNA + S-adenosyl-L-methionine = 5-methylcytidine(967) in 16S rRNA + S-adenosyl-L-homocysteine + H(+). In terms of biological role, specifically methylates the cytosine at position 967 (m5C967) of 16S rRNA. This is Ribosomal RNA small subunit methyltransferase B from Erwinia tasmaniensis (strain DSM 17950 / CFBP 7177 / CIP 109463 / NCPPB 4357 / Et1/99).